Here is a 276-residue protein sequence, read N- to C-terminus: 2,3,4,5-tetrahydropyridine-2,6-dicarboxylate N-succinyltransferase (276 aa).

Substrate-binding residues include Arg104 and Asp141.

This sequence belongs to the transferase hexapeptide repeat family. Homotrimer.

The protein resides in the cytoplasm. It catalyses the reaction (S)-2,3,4,5-tetrahydrodipicolinate + succinyl-CoA + H2O = (S)-2-succinylamino-6-oxoheptanedioate + CoA. It functions in the pathway amino-acid biosynthesis; L-lysine biosynthesis via DAP pathway; LL-2,6-diaminopimelate from (S)-tetrahydrodipicolinate (succinylase route): step 1/3. The sequence is that of 2,3,4,5-tetrahydropyridine-2,6-dicarboxylate N-succinyltransferase from Legionella pneumophila (strain Paris).